The sequence spans 397 residues: Acetate kinase (397 aa).

N8 contacts Mg(2+). Residue K15 coordinates ATP. R89 provides a ligand contact to substrate. The active-site Proton donor/acceptor is D146. ATP-binding positions include 206-210 (HVGNG), 283-285 (DMR), and 331-335 (GMGEN). E383 is a Mg(2+) binding site.

It belongs to the acetokinase family. In terms of assembly, homodimer. Requires Mg(2+) as cofactor. It depends on Mn(2+) as a cofactor.

The protein localises to the cytoplasm. The enzyme catalyses acetate + ATP = acetyl phosphate + ADP. It participates in metabolic intermediate biosynthesis; acetyl-CoA biosynthesis; acetyl-CoA from acetate: step 1/2. Functionally, catalyzes the formation of acetyl phosphate from acetate and ATP. Can also catalyze the reverse reaction. The sequence is that of Acetate kinase from Streptococcus agalactiae serotype III (strain NEM316).